Here is a 262-residue protein sequence, read N- to C-terminus: Protein BcsX (262 aa).

It functions in the pathway glycan metabolism; bacterial cellulose biosynthesis. This is Protein BcsX (bcsX) from Komagataeibacter xylinus (Gluconacetobacter xylinus).